Reading from the N-terminus, the 207-residue chain is Uridine kinase (207 aa).

14–21 is a binding site for ATP; sequence GGSGSGKT.

The protein belongs to the uridine kinase family.

Its subcellular location is the cytoplasm. The catalysed reaction is uridine + ATP = UMP + ADP + H(+). It catalyses the reaction cytidine + ATP = CMP + ADP + H(+). It participates in pyrimidine metabolism; CTP biosynthesis via salvage pathway; CTP from cytidine: step 1/3. The protein operates within pyrimidine metabolism; UMP biosynthesis via salvage pathway; UMP from uridine: step 1/1. The chain is Uridine kinase from Deinococcus deserti (strain DSM 17065 / CIP 109153 / LMG 22923 / VCD115).